The following is a 1100-amino-acid chain: Collagen alpha-2(I) chain (1100 aa).

The interval 1–982 (QYDGVKAPDP…PGPAGGGYDV (982 aa)) is disordered. 3 stretches are compositionally biased toward low complexity: residues 122 to 170 (EPGA…AAGP), 200 to 209 (EPGPNGAVGP), and 216 to 237 (PGNNGLNGAKGAAGTPGVAGAP). The segment covering 239–249 (FPGPRGGPGPQ) has biased composition (pro residues). A compositionally biased stretch (low complexity) spans 251 to 261 (PQGAAGQRGLA). The segment covering 268–277 (GVKGDGGPKG) has biased composition (gly residues). 4 stretches are compositionally biased toward low complexity: residues 333-352 (MPGARGASGAAGPRGPPGDA), 358-385 (SGPAGLRGLPGSPGSSGPPGKEGAAGPA), 435-448 (APGPDGNNGATGAT), and 460-472 (QGASGAPGFQGLP). Positions 473–482 (GPAGGAGEAG) are enriched in gly residues. Residues 507–517 (NPGAAGASGPQ) are compositionally biased toward low complexity. Over residues 530–557 (GTDGGKGEPGAAGAAGGPGHQGPGGMPG) the composition is skewed to gly residues. Basic and acidic residues predominate over residues 568-579 (KGEKGEGGHRGP). Over residues 633–646 (PAGAPGFAGPPGAD) the composition is skewed to low complexity. The segment covering 656 to 665 (GPSGGKGESG) has biased composition (gly residues). 3 stretches are compositionally biased toward low complexity: residues 666–691 (PSGPAGPAGQSGPPGASGPAGPTGAR), 702–729 (FPGAAGRVGAAGPAGLVGPPGAAGPAGK), and 757–775 (SGEKGXPGTPGTSGPLGLQ). Gly residues predominate over residues 788–797 (GSPGGAGAVG). 2 stretches are compositionally biased toward low complexity: residues 798-820 (EAGRVGPAGPAGARGAPGNLGLP) and 854-866 (AGPTGAAGRPGNR). Residues 867 to 876 (GESGPGGAAG) show a composition bias toward gly residues. A compositionally biased stretch (low complexity) spans 877 to 892 (AVGPAGARGAAGPSGP). Over residues 893 to 907 (RGEKGVAGEKGERGM) the composition is skewed to basic and acidic residues. Residues 916–935 (LQGMPGPSGPSGDTGSAGPN) show a composition bias toward low complexity. Residues 1071–1100 (TRLPLLDLAPLDLGGADQEFGLDLGPVCFK) enclose the Fibrillar collagen NC1 domain.

Belongs to the fibrillar collagen family.

It is found in the secreted. It localises to the extracellular space. Its subcellular location is the extracellular matrix. The polypeptide is Collagen alpha-2(I) chain (Epinephelus caninus (Dogtooth grouper)).